A 622-amino-acid polypeptide reads, in one-letter code: 1-deoxy-D-xylulose-5-phosphate synthase (622 aa).

Thiamine diphosphate is bound by residues His80 and 121-123 (GHS). Asp152 lines the Mg(2+) pocket. Residues 153-154 (GA), Asn181, Tyr288, and Glu370 each bind thiamine diphosphate. Residue Asn181 participates in Mg(2+) binding.

The protein belongs to the transketolase family. DXPS subfamily. In terms of assembly, homodimer. Mg(2+) serves as cofactor. It depends on thiamine diphosphate as a cofactor.

The catalysed reaction is D-glyceraldehyde 3-phosphate + pyruvate + H(+) = 1-deoxy-D-xylulose 5-phosphate + CO2. The protein operates within metabolic intermediate biosynthesis; 1-deoxy-D-xylulose 5-phosphate biosynthesis; 1-deoxy-D-xylulose 5-phosphate from D-glyceraldehyde 3-phosphate and pyruvate: step 1/1. Functionally, catalyzes the acyloin condensation reaction between C atoms 2 and 3 of pyruvate and glyceraldehyde 3-phosphate to yield 1-deoxy-D-xylulose-5-phosphate (DXP). The sequence is that of 1-deoxy-D-xylulose-5-phosphate synthase from Shewanella amazonensis (strain ATCC BAA-1098 / SB2B).